Consider the following 130-residue polypeptide: Small ribosomal subunit protein uS11 (130 aa).

This sequence belongs to the universal ribosomal protein uS11 family. As to quaternary structure, part of the 30S ribosomal subunit. Interacts with proteins S7 and S18. Binds to IF-3.

Located on the platform of the 30S subunit, it bridges several disparate RNA helices of the 16S rRNA. Forms part of the Shine-Dalgarno cleft in the 70S ribosome. The sequence is that of Small ribosomal subunit protein uS11 from Phytoplasma mali (strain AT).